The sequence spans 536 residues: Chaperonin GroEL (536 aa).

ATP-binding positions include 29–32 (TLGP), 86–90 (DGTTT), Gly-412, and Asp-493.

The protein belongs to the chaperonin (HSP60) family. In terms of assembly, forms a cylinder of 14 subunits composed of two heptameric rings stacked back-to-back. Interacts with the co-chaperonin GroES.

It localises to the cytoplasm. It catalyses the reaction ATP + H2O + a folded polypeptide = ADP + phosphate + an unfolded polypeptide.. Together with its co-chaperonin GroES, plays an essential role in assisting protein folding. The GroEL-GroES system forms a nano-cage that allows encapsulation of the non-native substrate proteins and provides a physical environment optimized to promote and accelerate protein folding. In Onion yellows phytoplasma (strain OY-M), this protein is Chaperonin GroEL.